Consider the following 261-residue polypeptide: MTHQTHAYHMVNPSPWPLTGALSALLMTFGLIMWFHFNSTALLMLGLTTNMLTMYQWWRDIIRESTFQGHHTPVVQKGLRYGMILFIISEVLFFTGFFWAFYHSSLAPTPELGGCWPPTGIHPLNPLEVPLLNTSVLLASGVSITWAHHSLMEGHRNHMLQALFITIALGVYFTLLQASEYYEAPFTISDGVYGSTFFVATGFHGLHVIIGSTFLIVCFFRQLKFHFTSSHHFGFEAAAWYWHFVDVVWLFLYVSIYWWGS.

Over 1–15 the chain is Mitochondrial matrix; it reads MTHQTHAYHMVNPSP. Residues 16-34 traverse the membrane as a helical segment; the sequence is WPLTGALSALLMTFGLIMW. Over 35-40 the chain is Mitochondrial intermembrane; sequence FHFNST. A helical membrane pass occupies residues 41–66; that stretch reads ALLMLGLTTNMLTMYQWWRDIIREST. At 67–72 the chain is on the mitochondrial matrix side; the sequence is FQGHHT. Residues 73–105 form a helical membrane-spanning segment; sequence PVVQKGLRYGMILFIISEVLFFTGFFWAFYHSS. Topologically, residues 106–128 are mitochondrial intermembrane; that stretch reads LAPTPELGGCWPPTGIHPLNPLE. A helical membrane pass occupies residues 129–152; the sequence is VPLLNTSVLLASGVSITWAHHSLM. Residues 153 to 155 lie on the Mitochondrial matrix side of the membrane; sequence EGH. A helical membrane pass occupies residues 156–183; that stretch reads RNHMLQALFITIALGVYFTLLQASEYYE. Topologically, residues 184–190 are mitochondrial intermembrane; that stretch reads APFTISD. A helical transmembrane segment spans residues 191–223; that stretch reads GVYGSTFFVATGFHGLHVIIGSTFLIVCFFRQL. The Mitochondrial matrix portion of the chain corresponds to 224-232; that stretch reads KFHFTSSHH. A helical membrane pass occupies residues 233–256; it reads FGFEAAAWYWHFVDVVWLFLYVSI. Over 257-261 the chain is Mitochondrial intermembrane; the sequence is YWWGS.

It belongs to the cytochrome c oxidase subunit 3 family. In terms of assembly, component of the cytochrome c oxidase (complex IV, CIV), a multisubunit enzyme composed of 14 subunits. The complex is composed of a catalytic core of 3 subunits MT-CO1, MT-CO2 and MT-CO3, encoded in the mitochondrial DNA, and 11 supernumerary subunits COX4I, COX5A, COX5B, COX6A, COX6B, COX6C, COX7A, COX7B, COX7C, COX8 and NDUFA4, which are encoded in the nuclear genome. The complex exists as a monomer or a dimer and forms supercomplexes (SCs) in the inner mitochondrial membrane with NADH-ubiquinone oxidoreductase (complex I, CI) and ubiquinol-cytochrome c oxidoreductase (cytochrome b-c1 complex, complex III, CIII), resulting in different assemblies (supercomplex SCI(1)III(2)IV(1) and megacomplex MCI(2)III(2)IV(2)).

The protein resides in the mitochondrion inner membrane. It carries out the reaction 4 Fe(II)-[cytochrome c] + O2 + 8 H(+)(in) = 4 Fe(III)-[cytochrome c] + 2 H2O + 4 H(+)(out). Its function is as follows. Component of the cytochrome c oxidase, the last enzyme in the mitochondrial electron transport chain which drives oxidative phosphorylation. The respiratory chain contains 3 multisubunit complexes succinate dehydrogenase (complex II, CII), ubiquinol-cytochrome c oxidoreductase (cytochrome b-c1 complex, complex III, CIII) and cytochrome c oxidase (complex IV, CIV), that cooperate to transfer electrons derived from NADH and succinate to molecular oxygen, creating an electrochemical gradient over the inner membrane that drives transmembrane transport and the ATP synthase. Cytochrome c oxidase is the component of the respiratory chain that catalyzes the reduction of oxygen to water. Electrons originating from reduced cytochrome c in the intermembrane space (IMS) are transferred via the dinuclear copper A center (CU(A)) of subunit 2 and heme A of subunit 1 to the active site in subunit 1, a binuclear center (BNC) formed by heme A3 and copper B (CU(B)). The BNC reduces molecular oxygen to 2 water molecules using 4 electrons from cytochrome c in the IMS and 4 protons from the mitochondrial matrix. This chain is Cytochrome c oxidase subunit 3 (MT-CO3), found in Tragelaphus oryx (Eland).